The following is a 208-amino-acid chain: Putative archaetidylserine decarboxylase proenzyme (208 aa).

Ser171 serves as the catalytic Schiff-base intermediate with substrate; via pyruvic acid. Ser171 bears the Pyruvic acid (Ser); by autocatalysis mark.

This sequence belongs to the phosphatidylserine decarboxylase family. PSD-A subfamily. As to quaternary structure, heterodimer of a large membrane-associated beta subunit and a small pyruvoyl-containing alpha subunit. The cofactor is pyruvate. In terms of processing, is synthesized initially as an inactive proenzyme. Formation of the active enzyme involves a self-maturation process in which the active site pyruvoyl group is generated from an internal serine residue via an autocatalytic post-translational modification. Two non-identical subunits are generated from the proenzyme in this reaction, and the pyruvate is formed at the N-terminus of the alpha chain, which is derived from the carboxyl end of the proenzyme. The post-translation cleavage follows an unusual pathway, termed non-hydrolytic serinolysis, in which the side chain hydroxyl group of the serine supplies its oxygen atom to form the C-terminus of the beta chain, while the remainder of the serine residue undergoes an oxidative deamination to produce ammonia and the pyruvoyl prosthetic group on the alpha chain.

It is found in the cell membrane. It catalyses the reaction archaetidylserine + H(+) = archaetidylethanolamine + CO2. In terms of biological role, catalyzes the formation of archaetidylethanolamine (PtdEtn) from archaetidylserine (PtdSer). The protein is Putative archaetidylserine decarboxylase proenzyme of Methanococcoides burtonii (strain DSM 6242 / NBRC 107633 / OCM 468 / ACE-M).